Here is a 243-residue protein sequence, read N- to C-terminus: Ubiquinone/menaquinone biosynthesis C-methyltransferase UbiE (243 aa).

S-adenosyl-L-methionine contacts are provided by residues T69, D90, and 116–117 (DA).

This sequence belongs to the class I-like SAM-binding methyltransferase superfamily. MenG/UbiE family.

It carries out the reaction a 2-demethylmenaquinol + S-adenosyl-L-methionine = a menaquinol + S-adenosyl-L-homocysteine + H(+). It catalyses the reaction a 2-methoxy-6-(all-trans-polyprenyl)benzene-1,4-diol + S-adenosyl-L-methionine = a 5-methoxy-2-methyl-3-(all-trans-polyprenyl)benzene-1,4-diol + S-adenosyl-L-homocysteine + H(+). It participates in quinol/quinone metabolism; menaquinone biosynthesis; menaquinol from 1,4-dihydroxy-2-naphthoate: step 2/2. It functions in the pathway cofactor biosynthesis; ubiquinone biosynthesis. Methyltransferase required for the conversion of demethylmenaquinol (DMKH2) to menaquinol (MKH2) and the conversion of 2-polyprenyl-6-methoxy-1,4-benzoquinol (DDMQH2) to 2-polyprenyl-3-methyl-6-methoxy-1,4-benzoquinol (DMQH2). This chain is Ubiquinone/menaquinone biosynthesis C-methyltransferase UbiE, found in Cupriavidus necator (strain ATCC 17699 / DSM 428 / KCTC 22496 / NCIMB 10442 / H16 / Stanier 337) (Ralstonia eutropha).